A 355-amino-acid polypeptide reads, in one-letter code: DNA polymerase IV (355 aa).

In terms of domain architecture, UmuC spans I7–G188. 2 residues coordinate Mg(2+): D11 and D106. The active site involves E107.

It belongs to the DNA polymerase type-Y family. In terms of assembly, monomer. Requires Mg(2+) as cofactor.

Its subcellular location is the cytoplasm. It carries out the reaction DNA(n) + a 2'-deoxyribonucleoside 5'-triphosphate = DNA(n+1) + diphosphate. Poorly processive, error-prone DNA polymerase involved in untargeted mutagenesis. Copies undamaged DNA at stalled replication forks, which arise in vivo from mismatched or misaligned primer ends. These misaligned primers can be extended by PolIV. Exhibits no 3'-5' exonuclease (proofreading) activity. May be involved in translesional synthesis, in conjunction with the beta clamp from PolIII. This chain is DNA polymerase IV, found in Legionella pneumophila (strain Paris).